Consider the following 428-residue polypeptide: GTPase Obg (428 aa).

The Obg domain occupies 1–158 (MFVDQVQVEV…RFIKLELKVL (158 aa)). One can recognise an OBG-type G domain in the interval 159-333 (ADVGLVGFPS…LMHKTAEVLK (175 aa)). Residues 165–172 (GFPSVGKS), 190–194 (FTTLV), 212–215 (DLPG), 282–285 (TKMD), and 314–316 (SSL) contribute to the GTP site. 2 residues coordinate Mg(2+): S172 and T192. One can recognise an OCT domain in the interval 350-428 (YKYQPEPALK…IDDFTFEFVE (79 aa)).

Belongs to the TRAFAC class OBG-HflX-like GTPase superfamily. OBG GTPase family. In terms of assembly, monomer. It depends on Mg(2+) as a cofactor.

The protein localises to the cytoplasm. In terms of biological role, an essential GTPase which binds GTP, GDP and possibly (p)ppGpp with moderate affinity, with high nucleotide exchange rates and a fairly low GTP hydrolysis rate. Plays a role in control of the cell cycle, stress response, ribosome biogenesis and in those bacteria that undergo differentiation, in morphogenesis control. The sequence is that of GTPase Obg from Lacticaseibacillus paracasei (strain ATCC 334 / BCRC 17002 / CCUG 31169 / CIP 107868 / KCTC 3260 / NRRL B-441) (Lactobacillus paracasei).